Here is a 245-residue protein sequence, read N- to C-terminus: Dehydrogenase/reductase SDR family member 6 (245 aa).

NAD(+) is bound by residues 16–18 (QGI), aspartate 37, and aspartate 58. Arginine 144 serves as a coordination point for substrate. The active-site Proton acceptor is the tyrosine 147. NAD(+) is bound by residues lysine 151 and 180–184 (VDTPS). Substrate-binding residues include arginine 188 and arginine 205.

This sequence belongs to the short-chain dehydrogenases/reductases (SDR) family. As to quaternary structure, homotetramer.

The protein localises to the cytoplasm. It carries out the reaction cis-4-hydroxy-L-proline + NAD(+) = 4-oxo-L-proline + NADH + H(+). It catalyses the reaction (R)-3-hydroxybutanoate + NAD(+) = acetoacetate + NADH + H(+). Its pathway is amino-acid metabolism. It participates in siderophore biosynthesis. Functionally, NAD(H)-dependent dehydrogenase/reductase with a preference for cyclic substrates. Catalyzes stereoselective conversion of 4-oxo-L-proline to cis-4-hydroxy-L-proline, likely a detoxification mechanism for ketoprolines. Mediates the formation of 2,5-dihydroxybenzoate (2,5-DHBA), a siderophore that chelates free cytoplasmic iron, thereby regulating iron transport and homeostasis while protecting cells against free radical-induced oxidative stress. The iron-siderophore complex is imported into mitochondria, providing an iron source for mitochondrial metabolic processes in particular heme synthesis. May act as a 3-hydroxybutyrate dehydrogenase. This chain is Dehydrogenase/reductase SDR family member 6 (bdh2), found in Xenopus laevis (African clawed frog).